We begin with the raw amino-acid sequence, 413 residues long: Eukaryotic initiation factor 4A-11 (413 aa).

The Q motif signature appears at 40–68 (ESFDAMGLQENLLRGIYAYGFEKPSAIQQ). Residues 71–241 (IVPFCKGLDV…RKFMNKPVRI (171 aa)) form the Helicase ATP-binding domain. Residue 84–91 (AQSGTGKT) coordinates ATP. The DEAD box signature appears at 189–192 (DEAD). In terms of domain architecture, Helicase C-terminal spans 252-413 (GIKQFYVNVD…ELPANVADLL (162 aa)).

Belongs to the DEAD box helicase family. eIF4A subfamily. EIF4F is a multi-subunit complex, the composition of which varies with external and internal environmental conditions. It is composed of at least EIF4A, EIF4E and EIF4G.

It catalyses the reaction ATP + H2O = ADP + phosphate + H(+). Functionally, ATP-dependent RNA helicase which is a subunit of the eIF4F complex involved in cap recognition and is required for mRNA binding to ribosome. In the current model of translation initiation, eIF4A unwinds RNA secondary structures in the 5'-UTR of mRNAs which is necessary to allow efficient binding of the small ribosomal subunit, and subsequent scanning for the initiator codon. The chain is Eukaryotic initiation factor 4A-11 from Nicotiana tabacum (Common tobacco).